The primary structure comprises 293 residues: Probable endonuclease 4 (293 aa).

Zn(2+) contacts are provided by histidine 77, histidine 118, glutamate 153, aspartate 187, histidine 190, histidine 221, aspartate 234, histidine 236, and glutamate 266.

Belongs to the AP endonuclease 2 family. The cofactor is Zn(2+).

It carries out the reaction Endonucleolytic cleavage to 5'-phosphooligonucleotide end-products.. Its function is as follows. Endonuclease IV plays a role in DNA repair. It cleaves phosphodiester bonds at apurinic or apyrimidinic (AP) sites, generating a 3'-hydroxyl group and a 5'-terminal sugar phosphate. The sequence is that of Probable endonuclease 4 from Mesoplasma florum (strain ATCC 33453 / NBRC 100688 / NCTC 11704 / L1) (Acholeplasma florum).